The primary structure comprises 78 residues: MFTLKKSLLLLFFLGTISLSVCKQERDADYEDKGEVEEVKRGIFSLIKGAAKLITKTVAKEAGKTGLELMACKVTNQC.

Positions 1–22 (MFTLKKSLLLLFFLGTISLSVC) are cleaved as a signal peptide. Residues 23–39 (KQERDADYEDKGEVEEV) constitute a propeptide, removed in mature form. A disulfide bridge connects residues Cys72 and Cys78.

As to expression, expressed by the skin glands.

The protein resides in the secreted. Its function is as follows. Has antimicrobial activity against Gram-negative bacterium E.coli ATCC 8739 (MIC=12.5 ug), against Gram positive bacteria S.aureus ATCC 6538 (MIC=3.1 ug), methicillin-resistant S.aureus ATCC 43300 (MIC=25 ug), B.subtilis ATCC 6633 (MIC=6.3 ug) and against fungus C.albicans ATCC 90028 (MIC=100 ug). The protein is Esculentin-2ISa of Odorrana ishikawae (Ishikawa's frog).